The sequence spans 617 residues: V-type proton ATPase catalytic subunit A (617 aa).

Aspartate 2 is subject to N-acetylalanine. Threonine 136 carries the post-translational modification Phosphothreonine. ATP is bound at residue 250–257 (GAFGCGKT). A Phosphoserine; by AMPK modification is found at serine 384.

This sequence belongs to the ATPase alpha/beta chains family. V-ATPase is a heteromultimeric enzyme made up of two complexes: the ATP-hydrolytic V1 complex and the proton translocation V0 complex. The V1 complex consists of three catalytic AB heterodimers that form a heterohexamer, three peripheral stalks each consisting of EG heterodimers, one central rotor including subunits D and F, and the regulatory subunits C and H. The proton translocation complex V0 consists of the proton transport subunit a, a ring of proteolipid subunits c9c'', rotary subunit d, subunits e and f, and the accessory subunits ATP6AP1/Ac45 and ATP6AP2/PRR. Interacts with the V0 complex V-ATPase subunit a4 ATP6V0A4. Interacts with WFS1. Interacts with alpha-crystallin B chain/CRYAB and with MTOR, forming a ternary complex. In terms of assembly, (Microbial infection) Interacts with Rabies virus protein M; this interaction promotes virion uncoating. Post-translationally, phosphorylation at Ser-384 by AMPK down-regulates its enzyme activity. In terms of tissue distribution, high expression in the skin.

Its subcellular location is the cytoplasm. It localises to the cytosol. It is found in the cytoplasmic vesicle. The protein localises to the secretory vesicle. The protein resides in the clathrin-coated vesicle membrane. Its subcellular location is the lysosome. It catalyses the reaction ATP + H2O + 4 H(+)(in) = ADP + phosphate + 5 H(+)(out). With respect to regulation, ATP hydrolysis occurs at the interface between the nucleotide-binding domains of subunits A and B. ATP hydrolysis triggers a conformational change in the subunits D and F, which induces a shift of subunit d. The c-ring is subsequently rotated and results in a continuous proton translocation across the membrane. In terms of biological role, catalytic subunit of the V1 complex of vacuolar(H+)-ATPase (V-ATPase), a multisubunit enzyme composed of a peripheral complex (V1) that hydrolyzes ATP and a membrane integral complex (V0) that translocates protons. V-ATPase is responsible for acidifying and maintaining the pH of intracellular compartments and in some cell types, is targeted to the plasma membrane, where it is responsible for acidifying the extracellular environment. In aerobic conditions, involved in intracellular iron homeostasis, thus triggering the activity of Fe(2+) prolyl hydroxylase (PHD) enzymes, and leading to HIF1A hydroxylation and subsequent proteasomal degradation. May play a role in neurite development and synaptic connectivity. Functionally, (Microbial infection) Plays an important role in virion uncoating during Rabies virus replication after membrane fusion. Specifically, participates in the dissociation of incoming viral matrix M proteins uncoating through direct interaction. This is V-type proton ATPase catalytic subunit A (ATP6V1A) from Homo sapiens (Human).